The primary structure comprises 413 residues: S-adenosylmethionine synthase (413 aa).

His-15 serves as a coordination point for ATP. Asp-17 lines the Mg(2+) pocket. Residue Glu-43 participates in K(+) binding. Residues Glu-56 and Gln-100 each contribute to the L-methionine site. The interval 100–110 (QSPDISQGVNE) is flexible loop. ATP contacts are provided by residues 171–173 (DGK), 248–249 (KF), Asp-257, 263–264 (RK), Ala-280, and Lys-284. Asp-257 contacts L-methionine. Lys-288 serves as a coordination point for L-methionine.

It belongs to the AdoMet synthase family. In terms of assembly, homotetramer; dimer of dimers. Mg(2+) is required as a cofactor. Requires K(+) as cofactor.

The protein resides in the cytoplasm. It catalyses the reaction L-methionine + ATP + H2O = S-adenosyl-L-methionine + phosphate + diphosphate. It functions in the pathway amino-acid biosynthesis; S-adenosyl-L-methionine biosynthesis; S-adenosyl-L-methionine from L-methionine: step 1/1. Its function is as follows. Catalyzes the formation of S-adenosylmethionine (AdoMet) from methionine and ATP. The overall synthetic reaction is composed of two sequential steps, AdoMet formation and the subsequent tripolyphosphate hydrolysis which occurs prior to release of AdoMet from the enzyme. The chain is S-adenosylmethionine synthase from Prochlorococcus marinus (strain MIT 9515).